Consider the following 133-residue polypeptide: Putative redox protein FMP46, mitochondrial (133 aa).

A mitochondrion-targeting transit peptide spans 1–21 (MSFWKTLQRQPRTISLFTNDI). Cysteine 97 is a catalytic residue.

It belongs to the FMP46 family.

It localises to the mitochondrion. Its function is as follows. Putative mitochondrial redox protein which could be involved in the reduction of small toxic molecules. The protein is Putative redox protein FMP46, mitochondrial (FMP46) of Saccharomyces cerevisiae (strain ATCC 204508 / S288c) (Baker's yeast).